We begin with the raw amino-acid sequence, 358 residues long: 4-hydroxy-2-oxovalerate aldolase 2 (358 aa).

Residues 16–268 (VLLHDMCLRD…ETGVDLFKLM (253 aa)) form the Pyruvate carboxyltransferase domain. A substrate-binding site is contributed by 24–25 (RD). Aspartate 25 contributes to the Mn(2+) binding site. Catalysis depends on histidine 28, which acts as the Proton acceptor. Positions 178 and 207 each coordinate substrate. Mn(2+) is bound by residues histidine 207 and histidine 209. Tyrosine 298 contributes to the substrate binding site.

It belongs to the 4-hydroxy-2-oxovalerate aldolase family.

It carries out the reaction (S)-4-hydroxy-2-oxopentanoate = acetaldehyde + pyruvate. This chain is 4-hydroxy-2-oxovalerate aldolase 2, found in Methylibium petroleiphilum (strain ATCC BAA-1232 / LMG 22953 / PM1).